The primary structure comprises 87 residues: Cell division topological specificity factor (87 aa).

This sequence belongs to the MinE family.

Prevents the cell division inhibition by proteins MinC and MinD at internal division sites while permitting inhibition at polar sites. This ensures cell division at the proper site by restricting the formation of a division septum at the midpoint of the long axis of the cell. The polypeptide is Cell division topological specificity factor (Leptothrix cholodnii (strain ATCC 51168 / LMG 8142 / SP-6) (Leptothrix discophora (strain SP-6))).